A 286-amino-acid polypeptide reads, in one-letter code: ATP synthase gamma chain (286 aa).

This sequence belongs to the ATPase gamma chain family. As to quaternary structure, F-type ATPases have 2 components, CF(1) - the catalytic core - and CF(0) - the membrane proton channel. CF(1) has five subunits: alpha(3), beta(3), gamma(1), delta(1), epsilon(1). CF(0) has three main subunits: a, b and c.

Its subcellular location is the cell inner membrane. Its function is as follows. Produces ATP from ADP in the presence of a proton gradient across the membrane. The gamma chain is believed to be important in regulating ATPase activity and the flow of protons through the CF(0) complex. The sequence is that of ATP synthase gamma chain from Flavobacterium johnsoniae (strain ATCC 17061 / DSM 2064 / JCM 8514 / BCRC 14874 / CCUG 350202 / NBRC 14942 / NCIMB 11054 / UW101) (Cytophaga johnsonae).